Reading from the N-terminus, the 564-residue chain is Kelch repeat and BTB domain-containing protein 1 (564 aa).

Residues 21–88 (CDINIVINDE…IYGIPLSLTN (68 aa)) enclose the BTB domain. Kelch repeat units lie at residues 252–297 (IELI…VLDN), 298–346 (IIYM…ADDE), 347–395 (YIYC…MLNG), 397–441 (IYVI…VHDG), 442–492 (KIYI…SAHN), and 494–539 (LYVG…CEPI).

The protein belongs to the poxviruses Kelch family. Interacts (via BTB domain) with host CUL3.

It is found in the host cytoplasm. Its function is as follows. Probable substrate-specific adapter of CUL3-containing E3 ubiquitin-protein ligases which mediate the ubiquitination and subsequent proteasomal degradation of host target proteins. The protein is Kelch repeat and BTB domain-containing protein 1 (KBTB1) of Homo sapiens (Human).